Here is a 526-residue protein sequence, read N- to C-terminus: Thymocyte selection-associated high mobility group box protein TOX (526 aa).

Over residues 194 to 203 (NMGGTNVAHN) the composition is skewed to polar residues. The tract at residues 194–264 (NMGGTNVAHN…KKDPNEPQKP (71 aa)) is disordered. Positions 209 to 220 (GSKSATPSPSSS) are enriched in low complexity. Residues 228–245 (DASKINGGEKRPASDMGK) show a composition bias toward basic and acidic residues. The Nuclear localization signal signature appears at 237–256 (KRPASDMGKKPKTPKKKKKK). Over residues 246-256 (KPKTPKKKKKK) the composition is skewed to basic residues. A DNA-binding region (HMG box) is located at residues 261–329 (PQKPVSAYAL…EYLKQLAAYR (69 aa)).

Belongs to the high motility group (HMG) box superfamily. In terms of assembly, interacts with HBO1 complex composed at least of KAT7/HBO1, ING4, MEAF6, and JADE2; this complex is involved in histone acetylation. Interacts with DNMT1, LEO1, PAF1, SAP130 and SIN3A; these interactors regulate chromatin remodeling. Interacts with an array of proteins involved in RNA processing and translation and DNA replication. Expressed in neurons of the subventricular zone (at protein level). Expressed in distinct subpopulations of thymocytes undergoing positive selection: double CD4-positive CD8-positive (DP) cells, CD4-positive CD8-low transitional cells and in single CD4-positive and CD8-positive cells (at protein level). Expressed in ILC progenitors and mature ILC subsets: ILC1, ILC2 and ILC3 (at protein level). Expressed in lymphoid tissue-inducer cells and bone marrow NK cell subsets. Abundant in thymus, liver and brain. Also detected in small intestine, spleen, stomach and testis. Highly expressed in tumor-infiltrating CD8-positive T cells (at protein level).

It localises to the nucleus. Transcriptional regulator with a major role in neural stem cell commitment and corticogenesis as well as in lymphoid cell development and lymphoid tissue organogenesis. Binds to GC-rich DNA sequences in the proximity of transcription start sites and may alter chromatin structure, modifying access of transcription factors to DNA. During cortical development, controls the neural stem cell pool by inhibiting the switch from proliferative to differentiating progenitors. Beyond progenitor cells, promotes neurite outgrowth in newborn neurons migrating to reach the cortical plate. May activate or repress critical genes for neural stem cell fate such as SOX2, EOMES and ROBO2. Plays an essential role in the development of lymphoid tissue-inducer (LTi) cells, a subset necessary for the formation of secondary lymphoid organs: peripheral lymph nodes and Peyer's patches. Acts as a developmental checkpoint and regulates thymocyte positive selection toward T cell lineage commitment. Required for the development of various T cell subsets, including CD4-positive helper T cells, CD8-positive cytotoxic T cells, regulatory T cells and CD1D-dependent natural killer T (NKT) cells. Required for the differentiation of common lymphoid progenitors (CMP) to innate lymphoid cells (ILC). May regulate the NOTCH-mediated gene program, promoting differentiation of the ILC lineage. Required at the progenitor phase of NK cell development in the bone marrow to specify NK cell lineage commitment. Upon chronic antigen stimulation, diverts T cell development by promoting the generation of exhaustive T cells, while suppressing effector and memory T cell programming. May regulate the expression of genes encoding inhibitory receptors such as PDCD1 and induce the exhaustion program, to prevent the overstimulation of T cells and activation-induced cell death. The sequence is that of Thymocyte selection-associated high mobility group box protein TOX from Mus musculus (Mouse).